The sequence spans 514 residues: MQSFLLHCPPIRLCMGLACILFLWNAVSGLKGEGKKDKEMALPPATVSGNEGLKKEKNGSFLHAAESVFKEKKMVKGLEVLATTELPARSVDLSTLNLTELVNGMLNRALKDSKQFFSVLSITSYSSFAFHKVSVAIYNISNPKTVDPAKFPTRHCYCLSNRTNDLSDFTALLVDIVGNSTSYLTEIFKSTSILSVTQTNESDCVFICVMVGKSGRNLSDFWEMVEKSPVINYTFTSGVSSVLATTRGTARTSRLTTQSQQSLLRPYSVRWSTQWVSALKSLPWTKTSAPSEKELAESKQMFPELPVGTIGTHSSAPSSSNMTRTPWGTNRYTQAPTVPMPMPLSVDDSTPEGPPWASLPSTSASIEDAQQLRSTGNLLHPTGILTTPSRLAQPSRASGTLMPGTQTTNPTQAPAPRVPQTDGIPAEWPFIPEKEPARDPAAHQVSKCPRPLLQEEAITDTPLPLAMKKLTPCLMELCRFFQQCLCAIQKRDFSSEAISNCYLPEKIRKLITLH.

An N-terminal signal peptide occupies residues 1 to 29 (MQSFLLHCPPIRLCMGLACILFLWNAVSG). N-linked (GlcNAc...) asparagine glycans are attached at residues N58, N97, N139, N161, N179, N200, N217, N232, and N321. The segment at 379-420 (LHPTGILTTPSRLAQPSRASGTLMPGTQTTNPTQAPAPRVPQ) is disordered. Polar residues predominate over residues 384-398 (ILTTPSRLAQPSRAS). The segment covering 403–415 (PGTQTTNPTQAPA) has biased composition (low complexity).

The protein resides in the secreted. This chain is HERV-H LTR-associating protein 1 homolog (Hhla1), found in Mus musculus (Mouse).